A 273-amino-acid chain; its full sequence is Polyamine aminopropyltransferase (273 aa).

A PABS domain is found at 5-238 (ENWFSERYSD…GFWSFTVASP (234 aa)). Position 34 (Q34) interacts with S-methyl-5'-thioadenosine. Residues H65 and D90 each coordinate spermidine. S-methyl-5'-thioadenosine is bound by residues E109 and 140 to 141 (DG). The active-site Proton acceptor is the D158. Residue 158-161 (DSTD) participates in spermidine binding. P165 contacts S-methyl-5'-thioadenosine.

The protein belongs to the spermidine/spermine synthase family. Homodimer or homotetramer.

It is found in the cytoplasm. It carries out the reaction S-adenosyl 3-(methylsulfanyl)propylamine + putrescine = S-methyl-5'-thioadenosine + spermidine + H(+). The protein operates within amine and polyamine biosynthesis; spermidine biosynthesis; spermidine from putrescine: step 1/1. Its function is as follows. Catalyzes the irreversible transfer of a propylamine group from the amino donor S-adenosylmethioninamine (decarboxy-AdoMet) to putrescine (1,4-diaminobutane) to yield spermidine. This is Polyamine aminopropyltransferase from Thermoplasma acidophilum (strain ATCC 25905 / DSM 1728 / JCM 9062 / NBRC 15155 / AMRC-C165).